Here is a 535-residue protein sequence, read N- to C-terminus: Inositol 1,4,5-trisphosphate receptor-interacting protein-like 2 (535 aa).

The N-terminal stretch at 1–38 (MSVHYTLNLRVFWPLVTGLCTALVCLYHVLRGSGGARA) is a signal peptide. Over 39 to 43 (EPADG) the chain is Extracellular. The helical transmembrane segment at 44–64 (VDGGFPLLKVAVLLLLSYVLL) threads the bilayer. Topologically, residues 65 to 535 (RCRHAVRQRF…RTQGFLEGEP (471 aa)) are cytoplasmic. Ser139 carries the post-translational modification Phosphoserine.

Belongs to the ITPRIP family.

It localises to the membrane. This chain is Inositol 1,4,5-trisphosphate receptor-interacting protein-like 2 (ITPRIPL2), found in Homo sapiens (Human).